The chain runs to 321 residues: 2-oxoglutarate-dependent dioxygenase frbH (321 aa).

The tract at residues 77 to 97 (SRNSDTHGYEPVATSTGAQDD) is disordered. One can recognise a Fe2OG dioxygenase domain in the interval 169–273 (ESLSTLSMFR…RFSIAYFLRA (105 aa)). Fe cation is bound by residues histidine 194, aspartate 196, and histidine 251. 2-oxoglutarate is bound at residue arginine 264.

It belongs to the iron/ascorbate-dependent oxidoreductase family.

The protein operates within antifungal biosynthesis. 2-oxoglutarate-dependent dioxygenase; part of the gene cluster that mediates the biosynthesis of the antifungal antibiotic FR901469, an inhibitor of beta-1,3-glucansynthase, exerting antifungal activity against the pathogenes Candida albicans and Aspergillus fumigatus. FR901469 is a cyclic depsipeptide containing 12 amino acid residues and a fatty acid chain. The NRPS frbI contains 12 modules responsible for the formation of the depsipeptide backbone which is denoted as Acyl-Thr-Ala-Tyr-Val-4OHPro-Thr-Thr-3OHPro-threo3OHGln-Gly-Thr-Orn-OH (C71H116N14O23). The PKS frbB is probably involved in the production of the hydrocarbon chain, and the acyl-CoA ligase frbC might be involved in the transport of the chain to the peptide ptoduct of frbI. Because FR901469 contains 3 hydroxylated amino acid residues, the 3 oxygenases frbA, frbH, and frbJ might be participating in amino acid hydroxylation. As no thioesterase domains were detected in frbI or frbB, the thioesterases frbD and frbE may instead release and cyclize the products of the NRPS and PKS, respectively. This chain is 2-oxoglutarate-dependent dioxygenase frbH, found in Dothideomycetidae sp. (strain 11243) (Fungal sp. (strain No.11243)).